Here is a 460-residue protein sequence, read N- to C-terminus: Methylenetetrahydrofolate--tRNA-(uracil-5-)-methyltransferase TrmFO (460 aa).

12–17 (GGGLAG) provides a ligand contact to FAD.

Belongs to the MnmG family. TrmFO subfamily. FAD serves as cofactor.

Its subcellular location is the cytoplasm. It carries out the reaction uridine(54) in tRNA + (6R)-5,10-methylene-5,6,7,8-tetrahydrofolate + NADH + H(+) = 5-methyluridine(54) in tRNA + (6S)-5,6,7,8-tetrahydrofolate + NAD(+). The enzyme catalyses uridine(54) in tRNA + (6R)-5,10-methylene-5,6,7,8-tetrahydrofolate + NADPH + H(+) = 5-methyluridine(54) in tRNA + (6S)-5,6,7,8-tetrahydrofolate + NADP(+). Functionally, catalyzes the folate-dependent formation of 5-methyl-uridine at position 54 (M-5-U54) in all tRNAs. In Crocosphaera subtropica (strain ATCC 51142 / BH68) (Cyanothece sp. (strain ATCC 51142)), this protein is Methylenetetrahydrofolate--tRNA-(uracil-5-)-methyltransferase TrmFO.